The following is a 145-amino-acid chain: Large ribosomal subunit protein uL15 (145 aa).

Residues 20–54 (GRGMASGKGKTATRGHKGQNSRSGGGVRPGFEGGQ) are disordered. Residues 42 to 52 (SGGGVRPGFEG) show a composition bias toward gly residues.

This sequence belongs to the universal ribosomal protein uL15 family. Part of the 50S ribosomal subunit.

In terms of biological role, binds to the 23S rRNA. This Mycoplasma mycoides subsp. mycoides SC (strain CCUG 32753 / NCTC 10114 / PG1) protein is Large ribosomal subunit protein uL15.